Here is a 428-residue protein sequence, read N- to C-terminus: Probable anion transporter 6 (428 aa).

An N-terminal signal peptide occupies residues 1 to 22 (MKFPKRYAIVLLTFMCTNVCYI). 11 consecutive transmembrane segments (helical) span residues 47–67 (MILS…GWAA), 74–94 (LVLL…PLDP), 98–118 (ILLV…FPSI), 137–157 (LTTS…PSLV), 164–184 (SVFS…FKFA), 221–241 (ILFS…HYAL), 269–289 (LPYL…DHLI), 301–321 (KLLN…LPLF), 327–347 (AIFC…GFAV), 356–376 (FAGI…IVGV), and 401–421 (TVFF…LIFS).

It belongs to the major facilitator superfamily. Sodium/anion cotransporter (TC 2.A.1.14) family.

It localises to the cell membrane. In terms of biological role, probable anion transporter. This is Probable anion transporter 6 (PHT4;6) from Oryza sativa subsp. japonica (Rice).